Reading from the N-terminus, the 411-residue chain is Serine--tRNA ligase (411 aa).

226–228 (TSE) contacts L-serine. An ATP-binding site is contributed by 257–259 (RKE). Glutamate 280 lines the L-serine pocket. 344-347 (EISS) contacts ATP. Residue serine 379 coordinates L-serine.

It belongs to the class-II aminoacyl-tRNA synthetase family. Type-1 seryl-tRNA synthetase subfamily. Homodimer. The tRNA molecule binds across the dimer.

It localises to the cytoplasm. The enzyme catalyses tRNA(Ser) + L-serine + ATP = L-seryl-tRNA(Ser) + AMP + diphosphate + H(+). It carries out the reaction tRNA(Sec) + L-serine + ATP = L-seryl-tRNA(Sec) + AMP + diphosphate + H(+). It functions in the pathway aminoacyl-tRNA biosynthesis; selenocysteinyl-tRNA(Sec) biosynthesis; L-seryl-tRNA(Sec) from L-serine and tRNA(Sec): step 1/1. Functionally, catalyzes the attachment of serine to tRNA(Ser). Is also able to aminoacylate tRNA(Sec) with serine, to form the misacylated tRNA L-seryl-tRNA(Sec), which will be further converted into selenocysteinyl-tRNA(Sec). The protein is Serine--tRNA ligase of Campylobacter jejuni subsp. doylei (strain ATCC BAA-1458 / RM4099 / 269.97).